Reading from the N-terminus, the 331-residue chain is Probable cyclic nucleotide synthase IK1_05630 (331 aa).

Belongs to the CD-NTase family. D12 subfamily.

Functionally, cyclic nucleotide synthase (second messenger synthase) of a CBASS antivirus system. CBASS (cyclic oligonucleotide-based antiphage signaling system) provides immunity against bacteriophage. The CD-NTase protein synthesizes cyclic nucleotides in response to infection; these serve as specific second messenger signals. The signals activate a diverse range of effectors, leading to bacterial cell death and thus abortive phage infection. A type I-B CBASS system. Its function is as follows. Probably a cyclic nucleotide synthase that makes second messenger nucleotide which activates a CBASS antiviral defense system. In terms of biological role, protects B.subtilis against phage infection. When IK1_05630 and IK1_05631 are introduced in B.subtilis BEST7003 there is 1000-fold protection against phage SBSphiC. Both genes are required for protection. Activation leads to bacterial cell lysis and death, which occurs before the phage has finished its replication cycle, thus protecting non-infected bacteria by aborting the phage infection and preventing its propagation. This chain is Probable cyclic nucleotide synthase IK1_05630, found in Bacillus cereus (strain VD146).